Here is a 565-residue protein sequence, read N- to C-terminus: Putative lipase ATG15 (565 aa).

The Cytoplasmic portion of the chain corresponds to 1 to 21 (MISNDYTKFSSKRRSLRYSNR). The helical; Signal-anchor for type II membrane protein transmembrane segment at 22 to 42 (ILLLMGTILLIVVYFYSDILV) threads the bilayer. At 43-565 (DKSIIMFRNE…EYTTFTKRLI (523 aa)) the chain is on the lumenal side. Asn217 carries N-linked (GlcNAc...) asparagine glycosylation. The Charge relay system role is filled by Ser347. Positions 488 to 538 (KKPKKQTTSSSSEKVDTSTTKSIDRTTITTRTNEKKWHPNPKDPSTTTTDD) are disordered. The span at 493 to 518 (QTTSSSSEKVDTSTTKSIDRTTITTR) shows a compositional bias: low complexity. The segment covering 519 to 528 (TNEKKWHPNP) has biased composition (basic and acidic residues).

The protein belongs to the AB hydrolase superfamily. Lipase family. Binds to both phosphatidylinositol (PI) and phosphatidylinositol 3,5-bisphosphate (PIP2).

The protein resides in the endosome. The protein localises to the multivesicular body membrane. Its subcellular location is the prevacuolar compartment membrane. It catalyses the reaction a triacylglycerol + H2O = a diacylglycerol + a fatty acid + H(+). In terms of biological role, lipase which is essential for lysis of subvacuolar cytoplasm to vacuole targeted bodies and intravacuolar autophagic bodies. Involved in the lysis of intravacuolar multivesicular body (MVB) vesicles. The intravacuolar membrane disintegration by ATG15 is critical to life span extension. The chain is Putative lipase ATG15 (ATG15) from Vanderwaltozyma polyspora (strain ATCC 22028 / DSM 70294 / BCRC 21397 / CBS 2163 / NBRC 10782 / NRRL Y-8283 / UCD 57-17) (Kluyveromyces polysporus).